Reading from the N-terminus, the 623-residue chain is MKCLSYQKVRLLLRHCAHRSFLRPGKELHAVLTTSGLKKAPRSYLSNALFQFYASSGEMVTAQKLFDEIPLSEKDNVDWTTLLSSFSRYGLLVNSMKLFVEMRRKRVEIDDVSVVCLFGVCAKLEDLGFAQQGHGVAVKMGVLTSVKVCNALMDMYGKCGLVSEVKRIFEELEEKSVVSWTVVLDTVVKWEGLERGREVFHEMPERNAVAWTVMVAGYLGAGFTREVLELLAEMVFRCGHGLNFVTLCSMLSACAQSGNLVVGRWVHVYALKKEMMMGEEASYDDVMVGTALVDMYAKCGNIDSSMNVFRLMRKRNVVTWNALFSGLAMHGKGRMVIDMFPQMIREVKPDDLTFTAVLSACSHSGIVDEGWRCFHSLRFYGLEPKVDHYACMVDLLGRAGLIEEAEILMREMPVPPNEVVLGSLLGSCSVHGKVEIAERIKRELIQMSPGNTEYQILMSNMYVAEGRSDIADGLRGSLRKRGIRKIPGLSSIYVNDSVHRFSSGDRSHPRTKEIYLKLNEVIERIRSAGYVPDVSGLVSHSEGDLEEKEQALCCHSEKLAVCFGLLETKPSTPLLVFKNLRICRDCHSAMKIVSKVYDREIIIRDRNRFHQFKGGSCSCSDYW.

The N-terminal 16 residues, 1–16 (MKCLSYQKVRLLLRHC), are a transit peptide targeting the mitochondrion. 11 PPR repeats span residues 42 to 72 (RSYL…IPLS), 75 to 109 (DNVD…RVEI), 110 to 144 (DDVS…GVLT), 145 to 179 (SVKV…SVVS), 180 to 206 (WTVV…MPER), 207 to 237 (NAVA…MVFR), 243 to 277 (NFVT…EMMM), 285 to 319 (DVMV…NVVT), 320 to 346 (WNAL…MIRE), 350 to 384 (DDLT…GLEP), and 385 to 419 (KVDH…PNEV). The type E motif stretch occupies residues 420–495 (VLGSLLGSCS…IPGLSSIYVN (76 aa)). Residues 496-526 (DSVHRFSSGDRSHPRTKEIYLKLNEVIERIR) are type E(+) motif. Residues 527 to 623 (SAGYVPDVSG…GGSCSCSDYW (97 aa)) are type DYW motif.

It belongs to the PPR family. PCMP-H subfamily.

The protein resides in the mitochondrion. This is Pentatricopeptide repeat-containing protein At5g15340, mitochondrial (PCMP-H91) from Arabidopsis thaliana (Mouse-ear cress).